A 150-amino-acid polypeptide reads, in one-letter code: Cytochrome c oxidase subunit 5A, mitochondrial (150 aa).

A mitochondrion-targeting transit peptide spans 1–41 (MLGAALRRCAVAATTWAGPRGHLHSARTPGPAAAIQSVRCY). Residues 2 to 17 (LGAALRRCAVAATTWA) carry the SIFI-degron motif. N6-acetyllysine occurs at positions 87 and 113. Threonine 141 carries the phosphothreonine modification.

Belongs to the cytochrome c oxidase subunit 5A family. Component of the cytochrome c oxidase (complex IV, CIV), a multisubunit enzyme composed of 14 subunits. The complex is composed of a catalytic core of 3 subunits MT-CO1, MT-CO2 and MT-CO3, encoded in the mitochondrial DNA, and 11 supernumerary subunits COX4I, COX5A, COX5B, COX6A, COX6B, COX6C, COX7A, COX7B, COX7C, COX8 and NDUFA4, which are encoded in the nuclear genome. The complex exists as a monomer or a dimer and forms supercomplexes (SCs) in the inner mitochondrial membrane with NADH-ubiquinone oxidoreductase (complex I, CI) and ubiquinol-cytochrome c oxidoreductase (cytochrome b-c1 complex, complex III, CIII), resulting in different assemblies (supercomplex SCI(1)III(2)IV(1) and megacomplex MCI(2)III(2)IV(2)). Interacts with AFG1L. Interacts with RAB5IF. In terms of processing, in response to mitochondrial stress, the precursor protein is ubiquitinated by the SIFI complex in the cytoplasm before mitochondrial import, leading to its degradation. Within the SIFI complex, UBR4 initiates ubiquitin chain that are further elongated or branched by KCMF1.

Its subcellular location is the mitochondrion inner membrane. It functions in the pathway energy metabolism; oxidative phosphorylation. Its function is as follows. Component of the cytochrome c oxidase, the last enzyme in the mitochondrial electron transport chain which drives oxidative phosphorylation. The respiratory chain contains 3 multisubunit complexes succinate dehydrogenase (complex II, CII), ubiquinol-cytochrome c oxidoreductase (cytochrome b-c1 complex, complex III, CIII) and cytochrome c oxidase (complex IV, CIV), that cooperate to transfer electrons derived from NADH and succinate to molecular oxygen, creating an electrochemical gradient over the inner membrane that drives transmembrane transport and the ATP synthase. Cytochrome c oxidase is the component of the respiratory chain that catalyzes the reduction of oxygen to water. Electrons originating from reduced cytochrome c in the intermembrane space (IMS) are transferred via the dinuclear copper A center (CU(A)) of subunit 2 and heme A of subunit 1 to the active site in subunit 1, a binuclear center (BNC) formed by heme A3 and copper B (CU(B)). The BNC reduces molecular oxygen to 2 water molecules using 4 electrons from cytochrome c in the IMS and 4 protons from the mitochondrial matrix. In Symphalangus syndactylus (Siamang), this protein is Cytochrome c oxidase subunit 5A, mitochondrial (COX5A).